The primary structure comprises 99 residues: Nucleoid-associated protein SPN23F10240 (99 aa).

The protein belongs to the YbaB/EbfC family. In terms of assembly, homodimer.

It localises to the cytoplasm. The protein localises to the nucleoid. Its function is as follows. Binds to DNA and alters its conformation. May be involved in regulation of gene expression, nucleoid organization and DNA protection. This is Nucleoid-associated protein SPN23F10240 from Streptococcus pneumoniae (strain ATCC 700669 / Spain 23F-1).